We begin with the raw amino-acid sequence, 484 residues long: Pentatricopeptide repeat-containing protein At1g09190 (484 aa).

10 PPR repeats span residues 66-100, 101-135, 136-166, 167-197, 198-232, 233-267, 269-299, 300-334, 336-366, and 372-406; these read NVLVFNAMIKCYSLVGPPLESLSFFSSMKSRGIWA, DEYTYAPLLKSCSSLSDLRFGKCVHGELIRTGFHR, LGKIRIGVVELYTSGGRMGDAQKVFDEMSER, NVVVWNLMIRGFCDSGDVERGLHLFKQMSER, SIVSWNSMISSLSKCGRDREALELFCEMIDQGFDP, DEATVVTVLPISASLGVLDTGKWIHSTAESSGLFK, FITVGNALVDFYCKSGDLEAATAIFRKMQRR, NVVSWNTLISGSAVNGKGEFGIDLFDAMIEEGKVA, NEATFLGVLACCSYTGQVERGEELFGLMMER, and RTEHYGAMVDLMSRSGRITEAFKFLKNMPVNANAA. The segment at 407 to 482 is type E motif; sequence MWGSLLSACR…STGQSTICDV (76 aa).

It belongs to the PPR family. PCMP-E subfamily.

In Arabidopsis thaliana (Mouse-ear cress), this protein is Pentatricopeptide repeat-containing protein At1g09190 (PCMP-E70).